The sequence spans 540 residues: 2,3-bisphosphoglycerate-independent phosphoglycerate mutase (540 aa).

Mn(2+)-binding residues include D25 and S75. The Phosphoserine intermediate role is filled by S75. Residues H136, 166 to 167 (RD), R198, R204, 269 to 272 (RPDR), and K342 each bind substrate. 5 residues coordinate Mn(2+): D409, H413, D450, H451, and H468.

The protein belongs to the BPG-independent phosphoglycerate mutase family. In terms of assembly, monomer. Requires Mn(2+) as cofactor.

It carries out the reaction (2R)-2-phosphoglycerate = (2R)-3-phosphoglycerate. It functions in the pathway carbohydrate degradation; glycolysis; pyruvate from D-glyceraldehyde 3-phosphate: step 3/5. In terms of biological role, catalyzes the interconversion of 2-phosphoglycerate and 3-phosphoglycerate. This is 2,3-bisphosphoglycerate-independent phosphoglycerate mutase from Prochlorococcus marinus subsp. pastoris (strain CCMP1986 / NIES-2087 / MED4).